We begin with the raw amino-acid sequence, 65 residues long: U11-theraphotoxin-Cg1a (65 aa).

An N-terminal signal peptide occupies residues M1–A21. A propeptide spanning residues T22–R29 is cleaved from the precursor. Disulfide bonds link C31/C45, C38/C50, and C44/C57.

The protein belongs to the neurotoxin 10 (Hwtx-1) family. 32 (Jztx-16) subfamily. In terms of tissue distribution, expressed by the venom gland.

It localises to the secreted. Functionally, probable ion channel inhibitor. In Chilobrachys guangxiensis (Chinese earth tiger tarantula), this protein is U11-theraphotoxin-Cg1a.